A 240-amino-acid chain; its full sequence is MALQPVTRRSVPEEVFEQIATDVLTGEMPPGEALPSERRLAELLGVSRPAVREALKRLSAAGLVEVRQGDVTTVRDFRRHAGLDLLPRLLFRNGELDISVVRSILEARLRNFPKVAELAAERNEPELAELLQDSLRALDTEEDPIVWQRHTLDFWDHVVDSAGSIVDRLMYNAFRAAYEPTLAALTTTMTAAAKRPSDYRKLADAICSGDPTGAKKAAQDLLELANTSLMAVLVSQASRQ.

Positions 9–77 (RSVPEEVFEQ…QGDVTTVRDF (69 aa)) constitute an HTH gntR-type domain. Positions 37–56 (ERRLAELLGVSRPAVREALK) form a DNA-binding region, H-T-H motif.

Functionally, negatively regulates the expression of its operon as well as expression of end (endonuclease 4). The sequence is that of HTH-type transcriptional regulator Mce2R (mce2R) from Mycobacterium tuberculosis (strain CDC 1551 / Oshkosh).